Reading from the N-terminus, the 429-residue chain is Aspartate--tRNA(Asp/Asn) ligase (429 aa).

E166 contacts L-aspartate. The segment at 188–191 (QLYK) is aspartate. Residue R210 coordinates L-aspartate. ATP-binding positions include 210-212 (RAE), 218-220 (RHL), and E352. E352 and S355 together coordinate Mg(2+). L-aspartate-binding residues include S355 and R359. Residue 400–403 (GIER) coordinates ATP.

The protein belongs to the class-II aminoacyl-tRNA synthetase family. Type 2 subfamily. In terms of assembly, homodimer. Requires Mg(2+) as cofactor.

The protein localises to the cytoplasm. It carries out the reaction tRNA(Asx) + L-aspartate + ATP = L-aspartyl-tRNA(Asx) + AMP + diphosphate. Functionally, aspartyl-tRNA synthetase with relaxed tRNA specificity since it is able to aspartylate not only its cognate tRNA(Asp) but also tRNA(Asn). Reaction proceeds in two steps: L-aspartate is first activated by ATP to form Asp-AMP and then transferred to the acceptor end of tRNA(Asp/Asn). The chain is Aspartate--tRNA(Asp/Asn) ligase from Methanoculleus marisnigri (strain ATCC 35101 / DSM 1498 / JR1).